The primary structure comprises 124 residues: Ribonuclease pancreatic (124 aa).

Residues 1-13 (KESAAAKFERQHM) show a composition bias toward basic and acidic residues. Residues 1 to 24 (KESAAAKFERQHMDSSTSSASSSN) are disordered. Substrate contacts are provided by lysine 7 and arginine 10. Histidine 12 serves as the catalytic Proton acceptor. Disulfide bonds link cysteine 26-cysteine 84, cysteine 40-cysteine 95, cysteine 58-cysteine 110, and cysteine 65-cysteine 72. Residues 41 to 45 (KPVNT), lysine 66, and arginine 85 each bind substrate. Catalysis depends on histidine 119, which acts as the Proton donor.

This sequence belongs to the pancreatic ribonuclease family. As to quaternary structure, monomer. Interacts with and forms tight 1:1 complexes with RNH1. Dimerization of two such complexes may occur. Interaction with RNH1 inhibits this protein. Pancreas.

It is found in the secreted. The enzyme catalyses an [RNA] containing cytidine + H2O = an [RNA]-3'-cytidine-3'-phosphate + a 5'-hydroxy-ribonucleotide-3'-[RNA].. It carries out the reaction an [RNA] containing uridine + H2O = an [RNA]-3'-uridine-3'-phosphate + a 5'-hydroxy-ribonucleotide-3'-[RNA].. Its function is as follows. Endonuclease that catalyzes the cleavage of RNA on the 3' side of pyrimidine nucleotides. Acts on single-stranded and double-stranded RNA. This is Ribonuclease pancreatic (RNASE1) from Connochaetes taurinus (Blue wildebeest).